The chain runs to 213 residues: Small ribosomal subunit protein uS4 (213 aa).

The tract at residues 16–53 is disordered; sequence GTDLGLKSGVKPYDVKTKKSARPPGQHGVSRNKSSEYS. The span at 44 to 53 shows a compositional bias: polar residues; sequence VSRNKSSEYS. In terms of domain architecture, S4 RNA-binding spans 97-163; it reads SRLDNVVYRM…EKSREQLRIK (67 aa).

This sequence belongs to the universal ribosomal protein uS4 family. Part of the 30S ribosomal subunit. Contacts protein S5. The interaction surface between S4 and S5 is involved in control of translational fidelity.

Functionally, one of the primary rRNA binding proteins, it binds directly to 16S rRNA where it nucleates assembly of the body of the 30S subunit. In terms of biological role, with S5 and S12 plays an important role in translational accuracy. This Psychrobacter arcticus (strain DSM 17307 / VKM B-2377 / 273-4) protein is Small ribosomal subunit protein uS4.